The sequence spans 213 residues: Heavy metal-binding protein HIP (213 aa).

The 134-residue stretch at 80–213 (FKSHHVAFSA…MSTFTGFMLH (134 aa)) folds into the C1q domain.

Pallium, gill and liver.

It localises to the secreted. Functionally, binds heavy metals. May function as a carrier of divalent cations in plasma. The polypeptide is Heavy metal-binding protein HIP (Mytilus edulis (Blue mussel)).